The primary structure comprises 212 residues: Probable chemoreceptor glutamine deamidase CheD (212 aa).

It belongs to the CheD family.

The enzyme catalyses L-glutaminyl-[protein] + H2O = L-glutamyl-[protein] + NH4(+). Functionally, probably deamidates glutamine residues to glutamate on methyl-accepting chemotaxis receptors (MCPs), playing an important role in chemotaxis. This is Probable chemoreceptor glutamine deamidase CheD from Bordetella parapertussis (strain 12822 / ATCC BAA-587 / NCTC 13253).